The chain runs to 631 residues: Phosphomethylpyrimidine synthase (631 aa).

Substrate-binding positions include Asn-239, Met-268, Tyr-297, His-333, 353–355 (SRG), 394–397 (DGLR), and Glu-433. A Zn(2+)-binding site is contributed by His-437. Residue Tyr-460 coordinates substrate. Position 501 (His-501) interacts with Zn(2+). Cys-581, Cys-584, and Cys-589 together coordinate [4Fe-4S] cluster.

It belongs to the ThiC family. Homodimer. The cofactor is [4Fe-4S] cluster.

The catalysed reaction is 5-amino-1-(5-phospho-beta-D-ribosyl)imidazole + S-adenosyl-L-methionine = 4-amino-2-methyl-5-(phosphooxymethyl)pyrimidine + CO + 5'-deoxyadenosine + formate + L-methionine + 3 H(+). Its pathway is cofactor biosynthesis; thiamine diphosphate biosynthesis. Catalyzes the synthesis of the hydroxymethylpyrimidine phosphate (HMP-P) moiety of thiamine from aminoimidazole ribotide (AIR) in a radical S-adenosyl-L-methionine (SAM)-dependent reaction. The sequence is that of Phosphomethylpyrimidine synthase from Salmonella paratyphi A (strain AKU_12601).